Here is a 337-residue protein sequence, read N- to C-terminus: Phosphate acyltransferase (337 aa).

It belongs to the PlsX family. As to quaternary structure, homodimer. Probably interacts with PlsY.

The protein localises to the cytoplasm. The enzyme catalyses a fatty acyl-[ACP] + phosphate = an acyl phosphate + holo-[ACP]. Its pathway is lipid metabolism; phospholipid metabolism. In terms of biological role, catalyzes the reversible formation of acyl-phosphate (acyl-PO(4)) from acyl-[acyl-carrier-protein] (acyl-ACP). This enzyme utilizes acyl-ACP as fatty acyl donor, but not acyl-CoA. The chain is Phosphate acyltransferase from Listeria innocua serovar 6a (strain ATCC BAA-680 / CLIP 11262).